The sequence spans 424 residues: Na(+), Li(+), K(+)/H(+) antiporter (424 aa).

A run of 12 helical transmembrane segments spans residues 15–35 (VGEF…AIYF), 42–62 (GLAG…NLFG), 74–94 (MLVS…LANS), 105–125 (VAFT…QAMI), 141–161 (FYTT…VLFF), 165–185 (FELL…LRFY), 227–247 (LLFV…DLVI), 274–294 (TSFG…TVVI), 305–325 (WVFF…PMTS), 327–347 (FWIF…VVGL), 367–389 (AASL…TAWF), and 393–415 (WTFI…MFHL).

The protein belongs to the major facilitator superfamily.

The protein resides in the cell membrane. Its activity is regulated as follows. Norfloxacin transport is inhibited by CCCP. Exhibits dual functions as a Na(+)(Li(+)/K(+))/H(+) antiporter and a multidrug efflux pump. Catalyzes the efflux of Na(+), Li(+) and K(+) in exchange for external protons. Shows a preference for Na(+), followed by K(+) and Li(+). Can also function as a multidrug efflux pump. Transports ethidium bromide and norfloxacin. The protein is Na(+), Li(+), K(+)/H(+) antiporter of Planococcus maritimus.